Here is a 196-residue protein sequence, read N- to C-terminus: Large ribosomal subunit protein uL10 (196 aa).

The interval 169 to 196 is disordered; sequence KAAECPAEAPQPAAETPAEAPEAPADAE. A compositionally biased stretch (low complexity) spans 172 to 196; it reads ECPAEAPQPAAETPAEAPEAPADAE.

It belongs to the universal ribosomal protein uL10 family. In terms of assembly, part of the ribosomal stalk of the 50S ribosomal subunit. The N-terminus interacts with L11 and the large rRNA to form the base of the stalk. The C-terminus forms an elongated spine to which L12 dimers bind in a sequential fashion forming a multimeric L10(L12)X complex.

In terms of biological role, forms part of the ribosomal stalk, playing a central role in the interaction of the ribosome with GTP-bound translation factors. The chain is Large ribosomal subunit protein uL10 from Mycobacterium avium (strain 104).